We begin with the raw amino-acid sequence, 453 residues long: Kynureninase (453 aa).

Residues Leu-114, Thr-115, 142–145 (FPSD), Asp-232, His-235, and Tyr-257 each bind pyridoxal 5'-phosphate. Lys-258 is subject to N6-(pyridoxal phosphate)lysine. Trp-286 serves as a coordination point for pyridoxal 5'-phosphate.

This sequence belongs to the kynureninase family. As to quaternary structure, homodimer. The cofactor is pyridoxal 5'-phosphate.

The protein localises to the cytoplasm. The enzyme catalyses L-kynurenine + H2O = anthranilate + L-alanine + H(+). It carries out the reaction 3-hydroxy-L-kynurenine + H2O = 3-hydroxyanthranilate + L-alanine + H(+). The protein operates within amino-acid degradation; L-kynurenine degradation; L-alanine and anthranilate from L-kynurenine: step 1/1. Its pathway is cofactor biosynthesis; NAD(+) biosynthesis; quinolinate from L-kynurenine: step 2/3. Catalyzes the cleavage of L-kynurenine (L-Kyn) and L-3-hydroxykynurenine (L-3OHKyn) into anthranilic acid (AA) and 3-hydroxyanthranilic acid (3-OHAA), respectively. The protein is Kynureninase of Cryptococcus neoformans var. neoformans serotype D (strain B-3501A) (Filobasidiella neoformans).